Consider the following 77-residue polypeptide: Immune protein Tsi2 (77 aa).

As to quaternary structure, forms a heterotetramer with Tse2 consisting of two Tse2 dimers and two Tsi2 dimers. Formation of the complex inactivates Tse2 enzymatic activity.

Immunity protein that plays a role in preventing early activation of toxin Tse2. Binds to a large surface of Tse2 and thereby occludes the active site to specifically inhibits Tse2. This is Immune protein Tsi2 from Pseudomonas aeruginosa (strain ATCC 15692 / DSM 22644 / CIP 104116 / JCM 14847 / LMG 12228 / 1C / PRS 101 / PAO1).